A 102-amino-acid chain; its full sequence is Putative lipid-transfer protein DIR1 (102 aa).

A signal peptide spans 1–25; sequence MASKKAAMVMMAMIVIMAMLVDTSV. 4 disulfides stabilise this stretch: C30–C67, C40–C56, C57–C94, and C69–C102. Q34 lines the a 1-acyl-sn-glycero-3-phosphocholine pocket. E36 is a Zn(2+) binding site. An a 1-acyl-sn-glycero-3-phosphocholine-binding site is contributed by N38. H62 is a Zn(2+) binding site.

It belongs to the A9/FIL1 family. Self-interacts and binds to AZI1. Does not interact with PDLP1. The cofactor is Zn(2+).

Its subcellular location is the secreted. The protein resides in the extracellular space. It localises to the apoplast. It is found in the endoplasmic reticulum. The protein localises to the cell junction. Its subcellular location is the plasmodesma. Putative lipid transfer protein required for systemic acquired resistance (SAR) long distance signaling. May interact with a lipid-derived molecule to promote long distance signaling associated with SAR. Together with AZI1, required for glycerol-3-phosphate- (G3P) and azelaic acid- (AA) induced systemic acquired resistance (SAR). Component of plant systemic immunity involved in priming defenses in a AA-dependent manner, by modulating production and/or translocation of a mobile signal(s) during SAR. Is able to bind with high affinity monoacylated phospholipids, mainly lysophosphatidylcholines. The polypeptide is Putative lipid-transfer protein DIR1 (DIR1) (Arabidopsis thaliana (Mouse-ear cress)).